A 292-amino-acid polypeptide reads, in one-letter code: Aspartate carbamoyltransferase catalytic subunit (292 aa).

Carbamoyl phosphate is bound by residues Arg49 and Thr50. An L-aspartate-binding site is contributed by Lys77. Carbamoyl phosphate contacts are provided by Arg99, His127, and Gln130. L-aspartate contacts are provided by Arg161 and Arg211. Gly250 and Pro251 together coordinate carbamoyl phosphate.

It belongs to the aspartate/ornithine carbamoyltransferase superfamily. ATCase family. Heterododecamer (2C3:3R2) of six catalytic PyrB chains organized as two trimers (C3), and six regulatory PyrI chains organized as three dimers (R2).

It catalyses the reaction carbamoyl phosphate + L-aspartate = N-carbamoyl-L-aspartate + phosphate + H(+). It functions in the pathway pyrimidine metabolism; UMP biosynthesis via de novo pathway; (S)-dihydroorotate from bicarbonate: step 2/3. In terms of biological role, catalyzes the condensation of carbamoyl phosphate and aspartate to form carbamoyl aspartate and inorganic phosphate, the committed step in the de novo pyrimidine nucleotide biosynthesis pathway. The sequence is that of Aspartate carbamoyltransferase catalytic subunit from Campylobacter lari (strain RM2100 / D67 / ATCC BAA-1060).